The chain runs to 128 residues: Elongation factor G (128 aa).

The protein belongs to the GTP-binding elongation factor family. EF-G/EF-2 subfamily.

The protein resides in the cytoplasm. Functionally, catalyzes the GTP-dependent ribosomal translocation step during translation elongation. During this step, the ribosome changes from the pre-translocational (PRE) to the post-translocational (POST) state as the newly formed A-site-bound peptidyl-tRNA and P-site-bound deacylated tRNA move to the P and E sites, respectively. Catalyzes the coordinated movement of the two tRNA molecules, the mRNA and conformational changes in the ribosome. The polypeptide is Elongation factor G (fusA) (Planobispora rosea).